Reading from the N-terminus, the 341-residue chain is L-threonine 3-dehydrogenase (341 aa).

A Zn(2+)-binding site is contributed by Cys-38. Residues Thr-40 and His-43 each act as charge relay system in the active site. 6 residues coordinate Zn(2+): His-63, Glu-64, Cys-93, Cys-96, Cys-99, and Cys-107. Residues Ile-175, Asp-195, Arg-200, 262–264 (LGI), and 286–287 (IY) each bind NAD(+).

Belongs to the zinc-containing alcohol dehydrogenase family. As to quaternary structure, homotetramer. Zn(2+) serves as cofactor.

Its subcellular location is the cytoplasm. It carries out the reaction L-threonine + NAD(+) = (2S)-2-amino-3-oxobutanoate + NADH + H(+). It functions in the pathway amino-acid degradation; L-threonine degradation via oxydo-reductase pathway; glycine from L-threonine: step 1/2. Its function is as follows. Catalyzes the NAD(+)-dependent oxidation of L-threonine to 2-amino-3-ketobutyrate. This chain is L-threonine 3-dehydrogenase, found in Shewanella halifaxensis (strain HAW-EB4).